Consider the following 254-residue polypeptide: Imidazole glycerol phosphate synthase subunit HisF (254 aa).

Active-site residues include D11 and D130.

Belongs to the HisA/HisF family. As to quaternary structure, heterodimer of HisH and HisF.

It localises to the cytoplasm. It catalyses the reaction 5-[(5-phospho-1-deoxy-D-ribulos-1-ylimino)methylamino]-1-(5-phospho-beta-D-ribosyl)imidazole-4-carboxamide + L-glutamine = D-erythro-1-(imidazol-4-yl)glycerol 3-phosphate + 5-amino-1-(5-phospho-beta-D-ribosyl)imidazole-4-carboxamide + L-glutamate + H(+). It participates in amino-acid biosynthesis; L-histidine biosynthesis; L-histidine from 5-phospho-alpha-D-ribose 1-diphosphate: step 5/9. In terms of biological role, IGPS catalyzes the conversion of PRFAR and glutamine to IGP, AICAR and glutamate. The HisF subunit catalyzes the cyclization activity that produces IGP and AICAR from PRFAR using the ammonia provided by the HisH subunit. The chain is Imidazole glycerol phosphate synthase subunit HisF from Trichlorobacter lovleyi (strain ATCC BAA-1151 / DSM 17278 / SZ) (Geobacter lovleyi).